The following is a 206-amino-acid chain: Ion-translocating oxidoreductase complex subunit G (206 aa).

Residues 9 to 29 (GITLALFAAGSTGLTAAINQM) form a helical membrane-spanning segment. The residue at position 174 (Thr-174) is an FMN phosphoryl threonine.

Belongs to the RnfG family. In terms of assembly, the complex is composed of six subunits: RsxA, RsxB, RsxC, RsxD, RsxE and RsxG. FMN serves as cofactor.

The protein resides in the cell inner membrane. In terms of biological role, part of a membrane-bound complex that couples electron transfer with translocation of ions across the membrane. Required to maintain the reduced state of SoxR. The polypeptide is Ion-translocating oxidoreductase complex subunit G (Escherichia coli O157:H7).